A 457-amino-acid chain; its full sequence is Cysteine--tRNA ligase (457 aa).

Residue cysteine 30 coordinates Zn(2+). The 'HIGH' region motif lies at 32–42; it reads PTVYAPAHIGN. Cysteine 221, histidine 246, and glutamate 250 together coordinate Zn(2+). Residues 278–282 carry the 'KMSKS' region motif; that stretch reads KMSKS. Lysine 281 serves as a coordination point for ATP.

The protein belongs to the class-I aminoacyl-tRNA synthetase family. As to quaternary structure, monomer. It depends on Zn(2+) as a cofactor.

The protein resides in the cytoplasm. It carries out the reaction tRNA(Cys) + L-cysteine + ATP = L-cysteinyl-tRNA(Cys) + AMP + diphosphate. This chain is Cysteine--tRNA ligase, found in Opitutus terrae (strain DSM 11246 / JCM 15787 / PB90-1).